A 127-amino-acid polypeptide reads, in one-letter code: Large ribosomal subunit protein bL17 (127 aa).

It belongs to the bacterial ribosomal protein bL17 family. Part of the 50S ribosomal subunit. Contacts protein L32.

This chain is Large ribosomal subunit protein bL17, found in Leuconostoc citreum (strain KM20).